Here is a 316-residue protein sequence, read N- to C-terminus: MVTMNRNKVVIVGTGQVGATAAFGIVTHGLCNELVLIDCSAAKALGEARDLDDGSEFQDRHVKVRAGDYADCKDADIVVITVGRKPPANSNRMAELGFTVGLVGEVVDNVMASGFDGVIVMVSNPVDVMAWYAWKRSGLPRTQVLGTGTALDTSRLKTIIGEETGLDPRNVGGFVMGEHGDSQFTAWSTVSLGGKPFARFLADNQDRFASVSTTEIEEKTRTRGNEIVAAKGGTNFGIASTVAGIVQTILWDERRIVPVSTLLDGEYGEHDVFLGVPTELRANGANEIVELDLSEDERAKLHHSAELVREHCEGLL.

Residues Val-17, Asp-38, Lys-43, and Tyr-69 each coordinate NAD(+). Substrate-binding positions include Arg-92 and 124–127 (NPVD). Residues 122 to 124 (VSN) and Thr-147 contribute to the NAD(+) site. 152-155 (DTSR) provides a ligand contact to substrate. The Proton acceptor role is filled by His-179. A substrate-binding site is contributed by Thr-234.

Belongs to the LDH/MDH superfamily. LDH family. Homotetramer.

It localises to the cytoplasm. The catalysed reaction is (S)-lactate + NAD(+) = pyruvate + NADH + H(+). The protein operates within fermentation; pyruvate fermentation to lactate; (S)-lactate from pyruvate: step 1/1. In terms of biological role, catalyzes the conversion of lactate to pyruvate. This is L-lactate dehydrogenase 1 from Bifidobacterium longum subsp. longum (strain ATCC 15707 / DSM 20219 / JCM 1217 / NCTC 11818 / E194b).